A 216-amino-acid polypeptide reads, in one-letter code: Somatotropin (216 aa).

The N-terminal stretch at 1–26 is a signal peptide; the sequence is MAAGPRNSVLLAFALLCLPWPQEVGT. His-45 contacts Zn(2+). The cysteines at positions 78 and 189 are disulfide-linked. Phosphoserine is present on Ser-131. Glu-198 serves as a coordination point for Zn(2+). Cys-206 and Cys-214 are oxidised to a cystine.

This sequence belongs to the somatotropin/prolactin family.

It is found in the secreted. Its function is as follows. Plays an important role in growth control. Its major role in stimulating body growth is to stimulate the liver and other tissues to secrete IGF1. It stimulates both the differentiation and proliferation of myoblasts. It also stimulates amino acid uptake and protein synthesis in muscle and other tissues. In Felis catus (Cat), this protein is Somatotropin (GH1).